The primary structure comprises 152 residues: Transcriptional regulator MraZ (152 aa).

2 SpoVT-AbrB domains span residues 5 to 52 and 81 to 124; these read ATLV…PLPE and ASEC…DETT.

It belongs to the MraZ family. Forms oligomers.

Its subcellular location is the cytoplasm. It localises to the nucleoid. Negatively regulates its own expression and that of the subsequent genes in the proximal part of the division and cell wall (dcw) gene cluster. Acts by binding directly to DNA. May also regulate the expression of genes outside the dcw cluster. The chain is Transcriptional regulator MraZ from Escherichia fergusonii (strain ATCC 35469 / DSM 13698 / CCUG 18766 / IAM 14443 / JCM 21226 / LMG 7866 / NBRC 102419 / NCTC 12128 / CDC 0568-73).